The following is a 333-amino-acid chain: Nucleoid-associated protein PSPTO_1265 (333 aa).

This sequence belongs to the YejK family.

It is found in the cytoplasm. The protein resides in the nucleoid. The polypeptide is Nucleoid-associated protein PSPTO_1265 (Pseudomonas syringae pv. tomato (strain ATCC BAA-871 / DC3000)).